The sequence spans 438 residues: MVALAFQGHLNPMLKFAKHLARTNLHFTLATTEQARDLLSSTADEPHRPVDLAFFSDGLPKDDPRDPDTLAKSLKKDGAKNLSKIIEEKRFDCIISVPFTPWVPAVAAAHNIPCAILWIQACGAFSVYYRYYMKTNPFPDLEDLNQTVELPALPLLEVRDLPSLMLPSQGANVNTLMAEFADCLKDVKWVLVNSFYELESEIIESMSDLKPIIPIGPLVSPFLLGNDEEKTLDMWKVDDYCMEWLDKQARSSVVYISFGSILKSLENQVETIATALKNRGVPFLWVIRPKEKGENVQVLQEMVKEGKGVVTEWGQQEKILSHMAISCFITHCGWNSTIETVVTGVPVVAYPTWIDQPLDARLLVDVFGIGVRMKNDAIDGELKVAEVERCIEAVTEGPAAADMRRRATELKHAARSAMSPGGSSAQNLDSFISDIPIT.

Residues S260, G314 to Q316, H331 to E339, and W353 to Q356 contribute to the UDP-alpha-D-glucose site.

Belongs to the UDP-glycosyltransferase family.

The sequence is that of UDP-glycosyltransferase 84B2 (UGT84B2) from Arabidopsis thaliana (Mouse-ear cress).